A 434-amino-acid chain; its full sequence is Serine hydroxymethyltransferase (434 aa).

(6S)-5,6,7,8-tetrahydrofolate-binding positions include Leu133 and 137 to 139 (GHL). Lys242 carries the post-translational modification N6-(pyridoxal phosphate)lysine.

The protein belongs to the SHMT family. Homodimer. It depends on pyridoxal 5'-phosphate as a cofactor.

It is found in the cytoplasm. The catalysed reaction is (6R)-5,10-methylene-5,6,7,8-tetrahydrofolate + glycine + H2O = (6S)-5,6,7,8-tetrahydrofolate + L-serine. Its pathway is one-carbon metabolism; tetrahydrofolate interconversion. The protein operates within amino-acid biosynthesis; glycine biosynthesis; glycine from L-serine: step 1/1. Its function is as follows. Catalyzes the reversible interconversion of serine and glycine with tetrahydrofolate (THF) serving as the one-carbon carrier. This reaction serves as the major source of one-carbon groups required for the biosynthesis of purines, thymidylate, methionine, and other important biomolecules. Also exhibits THF-independent aldolase activity toward beta-hydroxyamino acids, producing glycine and aldehydes, via a retro-aldol mechanism. The polypeptide is Serine hydroxymethyltransferase (Hyphomicrobium methylovorum).